Reading from the N-terminus, the 152-residue chain is Small ribosomal subunit protein uS11A (152 aa).

The disordered stretch occupies residues 131-152 (EDVTPIPSDSTRRKGGRRGRRL). The segment covering 143–152 (RKGGRRGRRL) has biased composition (basic residues).

It belongs to the universal ribosomal protein uS11 family.

In Anopheles gambiae (African malaria mosquito), this protein is Small ribosomal subunit protein uS11A.